A 152-amino-acid chain; its full sequence is MFLVIRVRGTTGVIKNIADTLDMLRLNRISHAVLVEDTPSYNGMLQKAKDYITWGEIDADLLAEIIAKRGKFTGNNKVTDEYVAENSDYKNIDELAKAVIAGEVKLMDLDIKPVFRLHPPRKGYEDIRLSVKEGGSLGYRGENIKDLAERML.

This sequence belongs to the universal ribosomal protein uL30 family. In terms of assembly, part of the 50S ribosomal subunit.

This is Large ribosomal subunit protein uL30 from Methanobrevibacter smithii (strain ATCC 35061 / DSM 861 / OCM 144 / PS).